The chain runs to 310 residues: Aspartate carbamoyltransferase catalytic subunit (310 aa).

Residues Arg58 and Thr59 each contribute to the carbamoyl phosphate site. Lys86 serves as a coordination point for L-aspartate. Carbamoyl phosphate-binding residues include Arg108, His136, and Gln139. Residues Arg169 and Arg222 each coordinate L-aspartate. Residues Gly264 and Pro265 each contribute to the carbamoyl phosphate site.

This sequence belongs to the aspartate/ornithine carbamoyltransferase superfamily. ATCase family. Heterododecamer (2C3:3R2) of six catalytic PyrB chains organized as two trimers (C3), and six regulatory PyrI chains organized as three dimers (R2).

It catalyses the reaction carbamoyl phosphate + L-aspartate = N-carbamoyl-L-aspartate + phosphate + H(+). Its pathway is pyrimidine metabolism; UMP biosynthesis via de novo pathway; (S)-dihydroorotate from bicarbonate: step 2/3. Functionally, catalyzes the condensation of carbamoyl phosphate and aspartate to form carbamoyl aspartate and inorganic phosphate, the committed step in the de novo pyrimidine nucleotide biosynthesis pathway. The chain is Aspartate carbamoyltransferase catalytic subunit from Campylobacter fetus subsp. fetus (strain 82-40).